We begin with the raw amino-acid sequence, 1929 residues long: Intraflagellar transport protein 140 (1929 aa).

2 WD repeats span residues Q76–K116 and L119–E158. A disordered region spans residues L774–R795. LRR repeat units lie at residues S957 to K980, I1019 to E1044, and A1510 to I1532.

It localises to the cell projection. The protein localises to the cilium. It is found in the flagellum. Its subcellular location is the cytoplasm. The protein resides in the cytoskeleton. It localises to the flagellum axoneme. The protein localises to the flagellum basal body. Its function is as follows. Component of the intraflagellar transport complex A (IFT-A) involved in flagellar assembly. This Giardia intestinalis (strain ATCC 50803 / WB clone C6) (Giardia lamblia) protein is Intraflagellar transport protein 140.